Reading from the N-terminus, the 374-residue chain is 8-amino-7-oxononanoate synthase (374 aa).

Substrate is bound by residues Arg22 and Arg29. 109–110 is a pyridoxal 5'-phosphate binding site; it reads GY. His134 contacts substrate. Residues Ser182, 207 to 210, and 227 to 230 each bind pyridoxal 5'-phosphate; these read DDAH and TLSK. Lys230 carries the N6-(pyridoxal phosphate)lysine modification. Residue Thr339 coordinates substrate.

This sequence belongs to the class-II pyridoxal-phosphate-dependent aminotransferase family. BioF subfamily. Homodimer. The cofactor is pyridoxal 5'-phosphate.

It carries out the reaction 6-carboxyhexanoyl-[ACP] + L-alanine + H(+) = (8S)-8-amino-7-oxononanoate + holo-[ACP] + CO2. It functions in the pathway cofactor biosynthesis; biotin biosynthesis. Its function is as follows. Catalyzes the decarboxylative condensation of pimeloyl-[acyl-carrier protein] and L-alanine to produce 8-amino-7-oxononanoate (AON), [acyl-carrier protein], and carbon dioxide. The sequence is that of 8-amino-7-oxononanoate synthase from Methylobacterium radiotolerans (strain ATCC 27329 / DSM 1819 / JCM 2831 / NBRC 15690 / NCIMB 10815 / 0-1).